The following is a 256-amino-acid chain: Cell division protein DivIB (256 aa).

Over 1 to 30 the chain is Cytoplasmic; the sequence is MNNSKVIKLQDRVPKLKNQKKKNKKNVNHR. Residues 31-51 traverse the membrane as a helical segment; sequence LILYISILFLLVLFLIYFRSP. Residues 52–256 are Extracellular-facing; sequence LSNIKKISVF…KELGAEEKKE (205 aa). In terms of domain architecture, POTRA spans 53-121; the sequence is SNIKKISVFG…NNIDIHIEEY (69 aa).

Belongs to the FtsQ/DivIB family. DivIB subfamily.

It localises to the cell membrane. Cell division protein that may be involved in stabilizing or promoting the assembly of the division complex. This Bacillus cereus (strain ATCC 14579 / DSM 31 / CCUG 7414 / JCM 2152 / NBRC 15305 / NCIMB 9373 / NCTC 2599 / NRRL B-3711) protein is Cell division protein DivIB.